We begin with the raw amino-acid sequence, 651 residues long: Acetyl-coenzyme A synthetase (651 aa).

Residues 191–194 (RGGK), Thr311, and Asn335 contribute to the CoA site. Residues 387-389 (GEP), 411-416 (DTWWQT), Asp500, and Arg515 each bind ATP. Residue Ser523 participates in CoA binding. Residue Arg526 coordinates ATP. Positions 537, 539, and 542 each coordinate Mg(2+). A CoA-binding site is contributed by Arg584. Lys609 is subject to N6-acetyllysine.

Belongs to the ATP-dependent AMP-binding enzyme family. Mg(2+) serves as cofactor. In terms of processing, acetylated. Deacetylation by the SIR2-homolog deacetylase activates the enzyme.

It carries out the reaction acetate + ATP + CoA = acetyl-CoA + AMP + diphosphate. Its function is as follows. Catalyzes the conversion of acetate into acetyl-CoA (AcCoA), an essential intermediate at the junction of anabolic and catabolic pathways. AcsA undergoes a two-step reaction. In the first half reaction, AcsA combines acetate with ATP to form acetyl-adenylate (AcAMP) intermediate. In the second half reaction, it can then transfer the acetyl group from AcAMP to the sulfhydryl group of CoA, forming the product AcCoA. The sequence is that of Acetyl-coenzyme A synthetase from Stutzerimonas stutzeri (strain A1501) (Pseudomonas stutzeri).